A 267-amino-acid chain; its full sequence is Indole-3-glycerol phosphate synthase (267 aa).

It belongs to the TrpC family.

It catalyses the reaction 1-(2-carboxyphenylamino)-1-deoxy-D-ribulose 5-phosphate + H(+) = (1S,2R)-1-C-(indol-3-yl)glycerol 3-phosphate + CO2 + H2O. It functions in the pathway amino-acid biosynthesis; L-tryptophan biosynthesis; L-tryptophan from chorismate: step 4/5. The chain is Indole-3-glycerol phosphate synthase from Verminephrobacter eiseniae (strain EF01-2).